A 284-amino-acid polypeptide reads, in one-letter code: tRNA dimethylallyltransferase (284 aa).

6–13 (GPTASGKS) provides a ligand contact to ATP. 8–13 (TASGKS) is a binding site for substrate. The segment at 31 to 34 (DSLS) is interaction with substrate tRNA.

The protein belongs to the IPP transferase family. As to quaternary structure, monomer. Mg(2+) is required as a cofactor.

The enzyme catalyses adenosine(37) in tRNA + dimethylallyl diphosphate = N(6)-dimethylallyladenosine(37) in tRNA + diphosphate. Its function is as follows. Catalyzes the transfer of a dimethylallyl group onto the adenine at position 37 in tRNAs that read codons beginning with uridine, leading to the formation of N6-(dimethylallyl)adenosine (i(6)A). The protein is tRNA dimethylallyltransferase of Nautilia profundicola (strain ATCC BAA-1463 / DSM 18972 / AmH).